The primary structure comprises 569 residues: Probable santalene synthase (569 aa).

Positions 284, 321, 325, 460, and 463 each coordinate (2E)-geranyl diphosphate. Residues Asp321 and Asp325 each contribute to the Mg(2+) site. The DDXXD motif motif lies at 321 to 325 (DDAYD). 3 residues coordinate Mg(2+): Asn463, Thr467, and Glu471.

This sequence belongs to the terpene synthase family. Tpsb subfamily. It depends on Mg(2+) as a cofactor. Mn(2+) is required as a cofactor.

Catalyzes the formation of santalene. The polypeptide is Probable santalene synthase (SSY) (Santalum murrayanum (Bitter quandong)).